A 36-amino-acid chain; its full sequence is Photosystem II reaction center protein M (36 aa).

Residues I5–L25 traverse the membrane as a helical segment.

The protein belongs to the PsbM family. PSII is composed of 1 copy each of membrane proteins PsbA, PsbB, PsbC, PsbD, PsbE, PsbF, PsbH, PsbI, PsbJ, PsbK, PsbL, PsbM, PsbT, PsbX, PsbY, PsbZ, Psb30/Ycf12, at least 3 peripheral proteins of the oxygen-evolving complex and a large number of cofactors. It forms dimeric complexes.

It localises to the plastid. Its subcellular location is the chloroplast thylakoid membrane. Functionally, one of the components of the core complex of photosystem II (PSII). PSII is a light-driven water:plastoquinone oxidoreductase that uses light energy to abstract electrons from H(2)O, generating O(2) and a proton gradient subsequently used for ATP formation. It consists of a core antenna complex that captures photons, and an electron transfer chain that converts photonic excitation into a charge separation. This subunit is found at the monomer-monomer interface. The chain is Photosystem II reaction center protein M from Chlorokybus atmophyticus (Soil alga).